The sequence spans 394 residues: Formate-dependent phosphoribosylglycinamide formyltransferase (394 aa).

Residues 22 to 23 (EL) and Glu82 each bind N(1)-(5-phospho-beta-D-ribosyl)glycinamide. ATP contacts are provided by residues Arg114, Lys155, 160–165 (SSGKGQ), 195–198 (EGFV), and Glu203. The ATP-grasp domain occupies 119–308 (RLAAETLKLP…EFALHVRAIL (190 aa)). Residues Glu267 and Glu279 each coordinate Mg(2+). Residues Asp286, Lys357, and 364–365 (RR) each bind N(1)-(5-phospho-beta-D-ribosyl)glycinamide.

The protein belongs to the PurK/PurT family. As to quaternary structure, homodimer.

The enzyme catalyses N(1)-(5-phospho-beta-D-ribosyl)glycinamide + formate + ATP = N(2)-formyl-N(1)-(5-phospho-beta-D-ribosyl)glycinamide + ADP + phosphate + H(+). It functions in the pathway purine metabolism; IMP biosynthesis via de novo pathway; N(2)-formyl-N(1)-(5-phospho-D-ribosyl)glycinamide from N(1)-(5-phospho-D-ribosyl)glycinamide (formate route): step 1/1. In terms of biological role, involved in the de novo purine biosynthesis. Catalyzes the transfer of formate to 5-phospho-ribosyl-glycinamide (GAR), producing 5-phospho-ribosyl-N-formylglycinamide (FGAR). Formate is provided by PurU via hydrolysis of 10-formyl-tetrahydrofolate. This is Formate-dependent phosphoribosylglycinamide formyltransferase from Tolumonas auensis (strain DSM 9187 / NBRC 110442 / TA 4).